The following is a 61-amino-acid chain: Large ribosomal subunit protein bL28 (61 aa).

The protein belongs to the bacterial ribosomal protein bL28 family.

The protein is Large ribosomal subunit protein bL28 of Nocardioides sp. (strain ATCC BAA-499 / JS614).